The following is a 198-amino-acid chain: MLYPTPIAKLIDSYSKLPGIGIKTATRLAFYTIGMSDEDVNDFAKNLLAAKRELTYCSVCGNLTDEDPCSICTDPSRDKSMILVVEDSKDVSAMEKIQEYHGYYHVLHGLISPMNGVGPDDINLKTLITRLMDSDVSEVIVATNATADGEATSMYISRVLKPAGIKVTRLARGLAVGSDIEYADEVTLLRAIENRTEL.

Residues 57–72 (CSVCGNLTDEDPCSIC) form a C4-type zinc finger. The Toprim domain maps to 80 to 175 (SMILVVEDSK…KVTRLARGLA (96 aa)).

Belongs to the RecR family.

Its function is as follows. May play a role in DNA repair. It seems to be involved in an RecBC-independent recombinational process of DNA repair. It may act with RecF and RecO. The sequence is that of Recombination protein RecR from Streptococcus uberis (strain ATCC BAA-854 / 0140J).